The following is a 250-amino-acid chain: V-type proton ATPase subunit D (250 aa).

Belongs to the V-ATPase D subunit family. As to quaternary structure, V-ATPase is a heteromultimeric enzyme made up of two complexes: the ATP-hydrolytic V1 complex and the proton translocation V0 complex. The V1 complex consists of three catalytic AB heterodimers that form a heterohexamer, three peripheral stalks each consisting of EG heterodimers, one central rotor including subunits D and F, and the regulatory subunits C and H. The proton translocation complex V0 consists of the proton transport subunit a, a ring of proteolipid subunits c9c'', rotary subunit d, subunits e and f, and two accessory subunits ATP6AP1/Ac45 and ATP6AP2/PRR.

Functionally, subunit of the V1 complex of vacuolar(H+)-ATPase (V-ATPase), a multisubunit enzyme composed of a peripheral complex (V1) that hydrolyzes ATP and a membrane integral complex (V0) that translocates protons. V-ATPase is responsible for acidifying and maintaining the pH of intracellular compartments and in some cell types, is targeted to the plasma membrane, where it is responsible for acidifying the extracellular environment. This is V-type proton ATPase subunit D (VATPD) from Suberites domuncula (Sponge).